A 445-amino-acid chain; its full sequence is UDP-N-acetylmuramate--L-alanine ligase (445 aa).

Position 113–119 (113–119 (GSHGKTS)) interacts with ATP.

It belongs to the MurCDEF family.

It is found in the cytoplasm. It carries out the reaction UDP-N-acetyl-alpha-D-muramate + L-alanine + ATP = UDP-N-acetyl-alpha-D-muramoyl-L-alanine + ADP + phosphate + H(+). It functions in the pathway cell wall biogenesis; peptidoglycan biosynthesis. Cell wall formation. The chain is UDP-N-acetylmuramate--L-alanine ligase from Enterococcus faecalis (strain ATCC 700802 / V583).